Reading from the N-terminus, the 182-residue chain is Prorelaxin (182 aa).

A signal peptide spans 1–25 (MRRLFLSHVLGAWLLLSQLPRELSG). Gln26 bears the Pyrrolidone carboxylic acid mark. 3 disulfides stabilise this stretch: Cys35/Cys169, Cys47/Cys182, and Cys168/Cys173. Residues 54-156 (KTVLRLEEPG…LKNLGLDKHS (103 aa)) constitute a propeptide, connecting peptide. The propeptide occupies 161 to 162 (MI). Position 163 is a pyrrolidone carboxylic acid (Gln163).

The protein belongs to the insulin family. Heterodimer of a B chain and an A chain linked by two disulfide bonds.

Its subcellular location is the secreted. In terms of biological role, relaxin is an ovarian hormone that acts with estrogen to produce dilatation of the birth canal in many mammals. In Equus caballus (Horse), this protein is Prorelaxin (RLN).